The primary structure comprises 278 residues: MQIMLCAISNIASGGCGEDCKYCTQSAHVKTNINKYKRKDIDQIVLEAKMAKKNEALGFCLVTAGAGLDDEKLEYVCKVAHAVQKEVEGLLLIACNGIANLEQLKELKKAGIFSYNHNLETSKEFFPNICSTHTWEQRFQTNLYAKEVGLMLCCGGIYGLGESEADRKSFRASLKELDPFSSPINFFIPNENLKLKQALLDPDEALNIIKDTKKDLPNAHIMVAGGREVVLKERQYEIFDAGASAIVVGDYLTTKGEEPSKDIQKLKQMGFSFASSCH.

The Radical SAM core domain maps to 1 to 227; the sequence is MQIMLCAISN…NAHIMVAGGR (227 aa). Residues cysteine 16, cysteine 20, and cysteine 23 each contribute to the [4Fe-4S] cluster site. Residues cysteine 60, cysteine 95, and cysteine 153 each contribute to the [2Fe-2S] cluster site.

The protein belongs to the radical SAM superfamily. Biotin synthase family. In terms of assembly, homodimer. Requires [4Fe-4S] cluster as cofactor. It depends on [2Fe-2S] cluster as a cofactor.

The enzyme catalyses (4R,5S)-dethiobiotin + (sulfur carrier)-SH + 2 reduced [2Fe-2S]-[ferredoxin] + 2 S-adenosyl-L-methionine = (sulfur carrier)-H + biotin + 2 5'-deoxyadenosine + 2 L-methionine + 2 oxidized [2Fe-2S]-[ferredoxin]. It functions in the pathway cofactor biosynthesis; biotin biosynthesis; biotin from 7,8-diaminononanoate: step 2/2. Functionally, catalyzes the conversion of dethiobiotin (DTB) to biotin by the insertion of a sulfur atom into dethiobiotin via a radical-based mechanism. The polypeptide is Biotin synthase (Campylobacter lari (strain RM2100 / D67 / ATCC BAA-1060)).